The chain runs to 184 residues: Potassium-transporting ATPase KdpC subunit (184 aa).

A helical membrane pass occupies residues 6 to 26; that stretch reads TAVLYTIISAVFLGLGYPLIM.

Belongs to the KdpC family. The system is composed of three essential subunits: KdpA, KdpB and KdpC.

The protein localises to the cell inner membrane. In terms of biological role, part of the high-affinity ATP-driven potassium transport (or Kdp) system, which catalyzes the hydrolysis of ATP coupled with the electrogenic transport of potassium into the cytoplasm. This subunit acts as a catalytic chaperone that increases the ATP-binding affinity of the ATP-hydrolyzing subunit KdpB by the formation of a transient KdpB/KdpC/ATP ternary complex. The chain is Potassium-transporting ATPase KdpC subunit from Acidobacterium capsulatum (strain ATCC 51196 / DSM 11244 / BCRC 80197 / JCM 7670 / NBRC 15755 / NCIMB 13165 / 161).